The primary structure comprises 331 residues: LIM/homeobox protein Lhx9 (331 aa).

LIM zinc-binding domains lie at 71 to 132 (TLCA…FSVK) and 133 to 194 (RCAR…LVQG). The tract at residues 253–275 (ETDLDRDQTYPPSQKTKRMRTSF) is disordered. Residues 268 to 327 (TKRMRTSFKHHQLRTMKSYFAINHNPDAKDLKQLAQKTGLTKRVLQGEQCSGFNSHTTRR) constitute a DNA-binding region (homeobox).

The protein resides in the nucleus. May be involved in gonadal development. This Xenopus laevis (African clawed frog) protein is LIM/homeobox protein Lhx9 (lhx9).